A 209-amino-acid polypeptide reads, in one-letter code: HTLV-1 basic zipper factor (209 aa).

The disordered stretch occupies residues 48-162 (DGLLSLEEES…SARKEKMQEL (115 aa)). 2 stretches are compositionally biased toward basic and acidic residues: residues 70–87 (APPR…AEEK) and 94–114 (REKE…EEKA). The Nuclear localization signal 1 motif lies at 87 to 92 (KRKRKK). Short sequence motifs (nuclear localization signal) lie at residues 116–120 (RRRRA) and 137–141 (RRERK). Residues 122 to 160 (KKAADVARRKQEEQERRERKWRQGAEKAKQHSARKEKMQ) are compositionally biased toward basic and acidic residues.

It belongs to the HTLV-1 HBZ protein family. Interacts with host ATF4; this interaction inhibits viral RNA transcriptional activation by preventing ATF4 binding to Tax-responsive elements. Interacts with host CREB1; this interaction inhibits host CREB1 transcriptional activity. Interacts with host JUN, JUNB and JUND. Interacts with host EP300.

It is found in the host nucleus. In terms of biological role, contributes to the regulation of viral RNA transcription by interacting with host proteins involved in transcriptional activation such as ATF4, or CREB1, and by inhibiting their activity. Additionally, HBZ suppresses host NF-kappa-B-driven transcription mediated by host RELA as well as transcription of some classical NF-kappa-B target genes, including IL8, IL2RA, IRF4, VCAM1, and VEGFA. The chain is HTLV-1 basic zipper factor (HBZ) from Homo sapiens (Human).